Here is a 299-residue protein sequence, read N- to C-terminus: Acetylglutamate kinase (299 aa).

Substrate-binding positions include 70–71, arginine 92, and asparagine 186; that span reads GG.

Belongs to the acetylglutamate kinase family. ArgB subfamily.

The protein localises to the cytoplasm. The enzyme catalyses N-acetyl-L-glutamate + ATP = N-acetyl-L-glutamyl 5-phosphate + ADP. It functions in the pathway amino-acid biosynthesis; L-arginine biosynthesis; N(2)-acetyl-L-ornithine from L-glutamate: step 2/4. In terms of biological role, catalyzes the ATP-dependent phosphorylation of N-acetyl-L-glutamate. The polypeptide is Acetylglutamate kinase (Petrotoga mobilis (strain DSM 10674 / SJ95)).